The chain runs to 107 residues: MASVRTMTDFHKRIEAADDKLIVLDFYANWCGPCKDMESTVKSLARKYSTKAVVLKIDVDKFEELTERYKVRSMPTFVFLRNNRRLAAFSGADEHKLTNMMAKLVKA.

A Thioredoxin domain is found at 2-106 (ASVRTMTDFH…LTNMMAKLVK (105 aa)). Active-site nucleophile residues include Cys-31 and Cys-34. A disulfide bridge links Cys-31 with Cys-34.

It belongs to the thioredoxin family.

It is found in the nucleus. Functionally, participates in various redox reactions through the reversible oxidation of its active center dithiol to a disulfide and catalyzes dithiol-disulfide exchange reactions. As a reducing substrate of peroxiredoxin 1, thioredoxin 2 is preferred over thioredoxin 1. Required for female meiosis and early embryonic development. The protein is Thioredoxin-1 (dhd) of Drosophila yakuba (Fruit fly).